The chain runs to 240 residues: Probable transcriptional regulatory protein HP_0162 (240 aa).

It belongs to the TACO1 family.

The protein localises to the cytoplasm. The polypeptide is Probable transcriptional regulatory protein HP_0162 (Helicobacter pylori (strain ATCC 700392 / 26695) (Campylobacter pylori)).